Reading from the N-terminus, the 319-residue chain is Ferrochelatase (319 aa).

Fe cation-binding residues include H192 and E271.

This sequence belongs to the ferrochelatase family.

It is found in the cytoplasm. The catalysed reaction is heme b + 2 H(+) = protoporphyrin IX + Fe(2+). Its pathway is porphyrin-containing compound metabolism; protoheme biosynthesis; protoheme from protoporphyrin-IX: step 1/1. Its function is as follows. Catalyzes the ferrous insertion into protoporphyrin IX. The protein is Ferrochelatase of Geotalea daltonii (strain DSM 22248 / JCM 15807 / FRC-32) (Geobacter daltonii).